The sequence spans 363 residues: S-adenosylmethionine:tRNA ribosyltransferase-isomerase (363 aa).

This sequence belongs to the QueA family. In terms of assembly, monomer.

The protein resides in the cytoplasm. It catalyses the reaction 7-aminomethyl-7-carbaguanosine(34) in tRNA + S-adenosyl-L-methionine = epoxyqueuosine(34) in tRNA + adenine + L-methionine + 2 H(+). It participates in tRNA modification; tRNA-queuosine biosynthesis. Functionally, transfers and isomerizes the ribose moiety from AdoMet to the 7-aminomethyl group of 7-deazaguanine (preQ1-tRNA) to give epoxyqueuosine (oQ-tRNA). This is S-adenosylmethionine:tRNA ribosyltransferase-isomerase from Pasteurella multocida (strain Pm70).